Here is a 359-residue protein sequence, read N- to C-terminus: Decorin (359 aa).

The signal sequence occupies residues 1–16; the sequence is MKATIILLLLAQVSWA. A propeptide spanning residues 17–30 is cleaved from the precursor; that stretch reads GPFQQRGLFDFMLE. A glycan (O-linked (Xyl...) (glycosaminoglycan) serine) is linked at Ser34. 2 disulfide bridges follow: Cys54–Cys60 and Cys58–Cys67. 12 LRR repeats span residues 73 to 93, 94 to 117, 118 to 141, 142 to 162, 163 to 186, 187 to 212, 213 to 233, 234 to 257, 258 to 281, 282 to 304, 305 to 334, and 335 to 359; these read DKVP…NNKI, TEIK…NNKI, SKVS…KNQL, KELP…ENEI, TKVR…TNPL, KSSG…DTNI, TSIP…GNKI, SRVD…FNSI, SAVD…NNKL, TRVP…NNNI, SVVG…SNPV, and QYWE…GNYK. Asn211 carries N-linked (GlcNAc...) asparagine glycosylation. Asn262 and Asn303 each carry an N-linked (GlcNAc...) asparagine glycan. Cys313 and Cys346 are joined by a disulfide.

It belongs to the small leucine-rich proteoglycan (SLRP) family. SLRP class I subfamily. As to quaternary structure, binds to type I and type II collagen, fibronectin and TGF-beta. Forms a ternary complex with MFAP2 and ELN. Interacts with DPT. In terms of processing, the attached glycosaminoglycan chain can be either chondroitin sulfate or dermatan sulfate depending upon the tissue of origin. Detected in placenta (at protein level). Detected in cerebrospinal fluid, fibroblasts and urine (at protein level).

Its subcellular location is the secreted. The protein localises to the extracellular space. It is found in the extracellular matrix. Functionally, may affect the rate of fibrils formation. The polypeptide is Decorin (DCN) (Homo sapiens (Human)).